The sequence spans 210 residues: Large ribosomal subunit protein bL17 (210 aa).

Residues 177-210 (TRSAQRPAFEQDAPESDSAPEAEAKTEEETASAN) are disordered.

Belongs to the bacterial ribosomal protein bL17 family. Part of the 50S ribosomal subunit. Contacts protein L32.

The sequence is that of Large ribosomal subunit protein bL17 from Rhodopirellula baltica (strain DSM 10527 / NCIMB 13988 / SH1).